We begin with the raw amino-acid sequence, 293 residues long: 4-hydroxy-tetrahydrodipicolinate synthase (293 aa).

Residue threonine 45 participates in pyruvate binding. Residue tyrosine 133 is the Proton donor/acceptor of the active site. Lysine 162 serves as the catalytic Schiff-base intermediate with substrate. Isoleucine 204 contacts pyruvate.

The protein belongs to the DapA family. As to quaternary structure, homotetramer; dimer of dimers.

It is found in the cytoplasm. It carries out the reaction L-aspartate 4-semialdehyde + pyruvate = (2S,4S)-4-hydroxy-2,3,4,5-tetrahydrodipicolinate + H2O + H(+). Its pathway is amino-acid biosynthesis; L-lysine biosynthesis via DAP pathway; (S)-tetrahydrodipicolinate from L-aspartate: step 3/4. In terms of biological role, catalyzes the condensation of (S)-aspartate-beta-semialdehyde [(S)-ASA] and pyruvate to 4-hydroxy-tetrahydrodipicolinate (HTPA). The polypeptide is 4-hydroxy-tetrahydrodipicolinate synthase (Brucella suis biovar 1 (strain 1330)).